The following is a 540-amino-acid chain: Homoserine O-acetyltransferase (540 aa).

Positions 66-404 constitute an AB hydrolase-1 domain; sequence NVILICHALT…QHGHDAFLLE (339 aa). The Nucleophile role is filled by Ser171. Residue Arg240 participates in substrate binding. The segment at 262–284 is disordered; sequence QDTDKSGIKGTTGTEGKNSSEIS. Active-site residues include Asp365 and His398. Asp399 is a substrate binding site. 2 CBS domains span residues 425–484 and 486–540; these read MNRN…ELDE and ITRD…GKYD.

This sequence belongs to the AB hydrolase superfamily. MetX family. As to quaternary structure, homodimer.

The protein localises to the cytoplasm. The enzyme catalyses L-homoserine + acetyl-CoA = O-acetyl-L-homoserine + CoA. It functions in the pathway amino-acid biosynthesis; L-methionine biosynthesis via de novo pathway; O-acetyl-L-homoserine from L-homoserine: step 1/1. Functionally, transfers an acetyl group from acetyl-CoA to L-homoserine, forming acetyl-L-homoserine. In vitro, can also use propionyl-CoA or butiryl-CoA as acyl donor. In Methanosarcina acetivorans (strain ATCC 35395 / DSM 2834 / JCM 12185 / C2A), this protein is Homoserine O-acetyltransferase.